We begin with the raw amino-acid sequence, 434 residues long: Histidinol dehydrogenase (434 aa).

Tyrosine 130, glutamine 188, and asparagine 211 together coordinate NAD(+). The substrate site is built by serine 237, glutamine 259, and histidine 262. Zn(2+) contacts are provided by glutamine 259 and histidine 262. Catalysis depends on proton acceptor residues glutamate 326 and histidine 327. Positions 327, 360, 414, and 419 each coordinate substrate. Aspartate 360 contributes to the Zn(2+) binding site. Histidine 419 is a Zn(2+) binding site.

The protein belongs to the histidinol dehydrogenase family. As to quaternary structure, homodimer. It depends on Zn(2+) as a cofactor.

The catalysed reaction is L-histidinol + 2 NAD(+) + H2O = L-histidine + 2 NADH + 3 H(+). It participates in amino-acid biosynthesis; L-histidine biosynthesis; L-histidine from 5-phospho-alpha-D-ribose 1-diphosphate: step 9/9. Functionally, catalyzes the sequential NAD-dependent oxidations of L-histidinol to L-histidinaldehyde and then to L-histidine. The protein is Histidinol dehydrogenase of Escherichia coli (strain K12).